Reading from the N-terminus, the 430-residue chain is Putrescine 2-hydroxylase (430 aa).

In terms of domain architecture, Rieske spans 88–203 (LYVGHQKLVP…LRDCHGLLFE (116 aa)). Positions 128, 130, 162, and 165 each coordinate [2Fe-2S] cluster.

It belongs to the bacterial ring-hydroxylating dioxygenase alpha subunit family. [2Fe-2S] cluster serves as cofactor.

Its function is as follows. Rieske-type iron sulfur protein that can catalyze in vitro the 2-hydroxylation of putrescine, forming 2-hydroxyputrescine. May be involved in the biosynthesis of the cyclic hydroxamate siderophore alcaligin. The chain is Putrescine 2-hydroxylase from Bordetella bronchiseptica (strain ATCC BAA-588 / NCTC 13252 / RB50) (Alcaligenes bronchisepticus).